The sequence spans 241 residues: Triosephosphate isomerase (241 aa).

Residue 8-10 coordinates substrate; sequence NWK. The active-site Electrophile is the histidine 93. Glutamate 163 serves as the catalytic Proton acceptor. Substrate-binding positions include glycine 169, serine 205, and 226-227; that span reads GG.

It belongs to the triosephosphate isomerase family. Homodimer.

It is found in the cytoplasm. The catalysed reaction is D-glyceraldehyde 3-phosphate = dihydroxyacetone phosphate. The protein operates within carbohydrate biosynthesis; gluconeogenesis. It participates in carbohydrate degradation; glycolysis; D-glyceraldehyde 3-phosphate from glycerone phosphate: step 1/1. Involved in the gluconeogenesis. Catalyzes stereospecifically the conversion of dihydroxyacetone phosphate (DHAP) to D-glyceraldehyde-3-phosphate (G3P). This is Triosephosphate isomerase from Bdellovibrio bacteriovorus (strain ATCC 15356 / DSM 50701 / NCIMB 9529 / HD100).